The chain runs to 436 residues: Ribulose bisphosphate carboxylase large chain (436 aa).

Substrate-binding residues include N104 and T154. The Proton acceptor role is filled by K156. Residue K158 participates in substrate binding. K182, D184, and E185 together coordinate Mg(2+). K182 is subject to N6-carboxylysine. H275 functions as the Proton acceptor in the catalytic mechanism. Residues R276, H308, and S360 each coordinate substrate.

The protein belongs to the RuBisCO large chain family. Type I subfamily. As to quaternary structure, heterohexadecamer of 8 large chains and 8 small chains. Mg(2+) is required as a cofactor.

The protein resides in the plastid. It is found in the chloroplast. The enzyme catalyses 2 (2R)-3-phosphoglycerate + 2 H(+) = D-ribulose 1,5-bisphosphate + CO2 + H2O. The catalysed reaction is D-ribulose 1,5-bisphosphate + O2 = 2-phosphoglycolate + (2R)-3-phosphoglycerate + 2 H(+). Its function is as follows. RuBisCO catalyzes two reactions: the carboxylation of D-ribulose 1,5-bisphosphate, the primary event in carbon dioxide fixation, as well as the oxidative fragmentation of the pentose substrate in the photorespiration process. Both reactions occur simultaneously and in competition at the same active site. This is Ribulose bisphosphate carboxylase large chain from Euglena stellata.